Consider the following 533-residue polypeptide: Chromosomal replication initiator protein DnaA (533 aa).

Positions 1 to 72 (MNDFWQHCSA…DLARDFWNAP (72 aa)) are domain I, interacts with DnaA modulators. Residues 72-196 (PIEVQFVLDP…EAADSMYERS (125 aa)) are domain II. Residues 83 to 120 (AGQRSPAGATPLAPRAPLPSANPAPVAPGPASAPAVDA) are disordered. Residues 96–110 (PRAPLPSANPAPVAP) are compositionally biased toward pro residues. Over residues 111–120 (GPASAPAVDA) the composition is skewed to low complexity. Residues 197–413 (KLNPVLTFDN…GALRKILAYS (217 aa)) form a domain III, AAA+ region region. ATP is bound by residues G241, G243, K244, and T245. Positions 414–533 (KFHGREITIE…LHVLEQTLKG (120 aa)) are domain IV, binds dsDNA.

The protein belongs to the DnaA family. In terms of assembly, oligomerizes as a right-handed, spiral filament on DNA at oriC.

It is found in the cytoplasm. Plays an essential role in the initiation and regulation of chromosomal replication. ATP-DnaA binds to the origin of replication (oriC) to initiate formation of the DNA replication initiation complex once per cell cycle. Binds the DnaA box (a 9 base pair repeat at the origin) and separates the double-stranded (ds)DNA. Forms a right-handed helical filament on oriC DNA; dsDNA binds to the exterior of the filament while single-stranded (ss)DNA is stabiized in the filament's interior. The ATP-DnaA-oriC complex binds and stabilizes one strand of the AT-rich DNA unwinding element (DUE), permitting loading of DNA polymerase. After initiation quickly degrades to an ADP-DnaA complex that is not apt for DNA replication. Binds acidic phospholipids. The protein is Chromosomal replication initiator protein DnaA of Burkholderia pseudomallei (strain 1710b).